Consider the following 750-residue polypeptide: Photosystem I P700 chlorophyll a apoprotein A1 (750 aa).

8 consecutive transmembrane segments (helical) span residues 70–93 (VFSA…FHGA), 156–179 (LYCT…FHYH), 195–219 (LNHH…HVSL), 291–309 (IAHH…GHMY), 346–369 (WHAQ…HHMY), 385–411 (LSLF…IFMV), 433–455 (AIIS…LYIH), and 531–549 (FLVH…LILL). [4Fe-4S] cluster is bound by residues Cys-573 and Cys-582. A run of 2 helical transmembrane segments spans residues 589 to 610 (HVFL…HFSW) and 664 to 686 (LSAY…MFLF). Residue His-675 coordinates chlorophyll a'. 2 residues coordinate chlorophyll a: Met-683 and Tyr-691. Trp-692 is a phylloquinone binding site. A helical transmembrane segment spans residues 724–744 (AVGVTHYLLGGIATTWAFFLA).

It belongs to the PsaA/PsaB family. The PsaA/B heterodimer binds the P700 chlorophyll special pair and subsequent electron acceptors. PSI consists of a core antenna complex that captures photons, and an electron transfer chain that converts photonic excitation into a charge separation. The eukaryotic PSI reaction center is composed of at least 11 subunits. The cofactor is P700 is a chlorophyll a/chlorophyll a' dimer, A0 is one or more chlorophyll a, A1 is one or both phylloquinones and FX is a shared 4Fe-4S iron-sulfur center..

Its subcellular location is the plastid. The protein localises to the chloroplast thylakoid membrane. It catalyses the reaction reduced [plastocyanin] + hnu + oxidized [2Fe-2S]-[ferredoxin] = oxidized [plastocyanin] + reduced [2Fe-2S]-[ferredoxin]. In terms of biological role, psaA and PsaB bind P700, the primary electron donor of photosystem I (PSI), as well as the electron acceptors A0, A1 and FX. PSI is a plastocyanin-ferredoxin oxidoreductase, converting photonic excitation into a charge separation, which transfers an electron from the donor P700 chlorophyll pair to the spectroscopically characterized acceptors A0, A1, FX, FA and FB in turn. Oxidized P700 is reduced on the lumenal side of the thylakoid membrane by plastocyanin. The polypeptide is Photosystem I P700 chlorophyll a apoprotein A1 (Amborella trichopoda).